The chain runs to 610 residues: Elongation factor 4 (610 aa).

The region spanning 11–193 is the tr-type G domain; the sequence is QRIRNFSIVA…KIVQDIPAPT (183 aa). Residues 23 to 28 and 140 to 143 each bind GTP; these read DHGKST and NKVD.

It belongs to the TRAFAC class translation factor GTPase superfamily. Classic translation factor GTPase family. LepA subfamily.

It localises to the cell membrane. It carries out the reaction GTP + H2O = GDP + phosphate + H(+). In terms of biological role, required for accurate and efficient protein synthesis under certain stress conditions. May act as a fidelity factor of the translation reaction, by catalyzing a one-codon backward translocation of tRNAs on improperly translocated ribosomes. Back-translocation proceeds from a post-translocation (POST) complex to a pre-translocation (PRE) complex, thus giving elongation factor G a second chance to translocate the tRNAs correctly. Binds to ribosomes in a GTP-dependent manner. The sequence is that of Elongation factor 4 from Limosilactobacillus fermentum (strain NBRC 3956 / LMG 18251) (Lactobacillus fermentum).